Consider the following 172-residue polypeptide: Peptidyl-prolyl cis-trans isomerase CYP18-4 (172 aa).

Residues 7 to 170 (FFDMSLSGTP…KVVTITDCGQ (164 aa)) enclose the PPIase cyclophilin-type domain.

The protein belongs to the cyclophilin-type PPIase family. In terms of assembly, interacts with A.tumefaciens VirD2. As to expression, ubiquitous, with higher levels in roots and flowers. Confined to vascular tissues. Also detected in stigmas, base of siliques and anthers.

It is found in the cytoplasm. It carries out the reaction [protein]-peptidylproline (omega=180) = [protein]-peptidylproline (omega=0). Its activity is regulated as follows. Binds cyclosporin A (CsA). CsA mediates some of its effects via an inhibitory action on PPIase. In terms of biological role, PPIases accelerate the folding of proteins. It catalyzes the cis-trans isomerization of proline imidic peptide bonds in oligopeptides. The polypeptide is Peptidyl-prolyl cis-trans isomerase CYP18-4 (CYP18-4) (Arabidopsis thaliana (Mouse-ear cress)).